The sequence spans 129 residues: Phosphoribosyl-AMP cyclohydrolase (129 aa).

Asp87 is a Mg(2+) binding site. Cys88 contributes to the Zn(2+) binding site. The Mg(2+) site is built by Asp89 and Asp91. Positions 104 and 111 each coordinate Zn(2+).

The protein belongs to the PRA-CH family. As to quaternary structure, homodimer. Mg(2+) is required as a cofactor. The cofactor is Zn(2+).

It localises to the cytoplasm. The catalysed reaction is 1-(5-phospho-beta-D-ribosyl)-5'-AMP + H2O = 1-(5-phospho-beta-D-ribosyl)-5-[(5-phospho-beta-D-ribosylamino)methylideneamino]imidazole-4-carboxamide. It participates in amino-acid biosynthesis; L-histidine biosynthesis; L-histidine from 5-phospho-alpha-D-ribose 1-diphosphate: step 3/9. Functionally, catalyzes the hydrolysis of the adenine ring of phosphoribosyl-AMP. The polypeptide is Phosphoribosyl-AMP cyclohydrolase (Ruegeria sp. (strain TM1040) (Silicibacter sp.)).